We begin with the raw amino-acid sequence, 654 residues long: tRNA 5-methylaminomethyl-2-thiouridine biosynthesis bifunctional protein MnmC (654 aa).

The segment at 1–236 (MSTLLQHAQI…KWEVMHGVYT (236 aa)) is tRNA (mnm(5)s(2)U34)-methyltransferase. The interval 262 to 654 (IGAGLAGSAT…FALRRLIRGK (393 aa)) is FAD-dependent cmnm(5)s(2)U34 oxidoreductase.

The protein in the N-terminal section; belongs to the methyltransferase superfamily. tRNA (mnm(5)s(2)U34)-methyltransferase family. In the C-terminal section; belongs to the DAO family. Requires FAD as cofactor.

It is found in the cytoplasm. It carries out the reaction 5-aminomethyl-2-thiouridine(34) in tRNA + S-adenosyl-L-methionine = 5-methylaminomethyl-2-thiouridine(34) in tRNA + S-adenosyl-L-homocysteine + H(+). Functionally, catalyzes the last two steps in the biosynthesis of 5-methylaminomethyl-2-thiouridine (mnm(5)s(2)U) at the wobble position (U34) in tRNA. Catalyzes the FAD-dependent demodification of cmnm(5)s(2)U34 to nm(5)s(2)U34, followed by the transfer of a methyl group from S-adenosyl-L-methionine to nm(5)s(2)U34, to form mnm(5)s(2)U34. This is tRNA 5-methylaminomethyl-2-thiouridine biosynthesis bifunctional protein MnmC from Pseudomonas entomophila (strain L48).